Consider the following 88-residue polypeptide: Small ribosomal subunit protein uS19 (88 aa).

This sequence belongs to the universal ribosomal protein uS19 family.

Functionally, protein S19 forms a complex with S13 that binds strongly to the 16S ribosomal RNA. In Chlamydia abortus (strain DSM 27085 / S26/3) (Chlamydophila abortus), this protein is Small ribosomal subunit protein uS19.